The primary structure comprises 668 residues: Small ribosomal subunit protein mS81 (rPPR8) (668 aa).

Residues 1 to 36 (MRYQQWRLMLLRSYHRSHLPYLSPCSQVTSISSRSF) constitute a mitochondrion transit peptide. 7 PPR repeats span residues 286–320 (DEKTYNAMARVLGKEKFLDRFQNIVVEMRSAGYEV), 321–355 (EIETYVRVSTRFCQTKLIKEAVDLFEIAMAGSSSS), 396–430 (TDSLLKSVLKSLRSVDRVEQSNELLKEMKRGGYVP), 431–465 (SGDMQSMIASSLSRKGKKDEADEFVDFMESSGNNL), 466–496 (DDKAMASLVEGYCDSGNLDEALVCFEKMVGN), 502–537 (ADYSFEKLVLAYCNKNQVRDAYKLLSAQVTKNQLKP), and 543–577 (KSLVTNLLTKKIARDGGFEEALSLLPIMKDHGFPP).

Belongs to the PPR family. P subfamily. In terms of assembly, component of the mitochondrial ribosome small subunit.

It localises to the mitochondrion. The protein is Small ribosomal subunit protein mS81 (rPPR8) of Arabidopsis thaliana (Mouse-ear cress).